A 202-amino-acid chain; its full sequence is Securin (202 aa).

Ala-2 bears the N-acetylalanine mark. Positions 35 to 94 (LDGRSQVSTPRFGKTFDAPPALPKATRKALGTVNRATEKSVKTKGPLKQKQPSFSAKKMT) are disordered. A D-box motif is present at residues 61–64 (RKAL). Short sequence motifs (TEK-box) lie at residues 71–73 (TEK) and 94–96 (TEK). Residues 163–173 (PPSPVRMPSPP) carry the SH3-binding motif. Position 165 is a phosphoserine; by CDK1 (Ser-165).

It belongs to the securin family. Interacts with RPS10 and DNAJA1. Interacts with the caspase-like ESPL1, and prevents its protease activity probably by covering its active site. Interacts with TP53 and blocks its activity probably by blocking its binding to DNA. Interacts with the Ku 70 kDa subunit of ds-DNA kinase. Interacts with PTTG1IP. Phosphorylated at Ser-165 by CDK1 during mitosis. Post-translationally, phosphorylated in vitro by ds-DNA kinase. In terms of processing, ubiquitinated through 'Lys-11' linkage of ubiquitin moieties by the anaphase promoting complex (APC) at the onset of anaphase, conducting to its degradation. 'Lys-11'-linked ubiquitination is mediated by the E2 ligase UBE2C/UBCH10.

The protein resides in the cytoplasm. It is found in the nucleus. Functionally, regulatory protein, which plays a central role in chromosome stability, in the p53/TP53 pathway, and DNA repair. Probably acts by blocking the action of key proteins. During the mitosis, it blocks Separase/ESPL1 function, preventing the proteolysis of the cohesin complex and the subsequent segregation of the chromosomes. At the onset of anaphase, it is ubiquitinated, conducting to its destruction and to the liberation of ESPL1. Its function is however not limited to a blocking activity, since it is required to activate ESPL1. Negatively regulates the transcriptional activity and related apoptosis activity of TP53. The negative regulation of TP53 may explain the strong transforming capability of the protein when it is overexpressed. May also play a role in DNA repair via its interaction with Ku, possibly by connecting DNA damage-response pathways with sister chromatid separation. The chain is Securin (PTTG1) from Gorilla gorilla gorilla (Western lowland gorilla).